The sequence spans 499 residues: MRLGCSGRRRRLLRAALLRLVVLVLVAPPRRCAGESATCLAVYREGGAPAVFQSAHCPRWTLLAPSAGSGGEGDGDRRSSSSSPPPPPHPRGCHVAVDRGRRRSQEDRAVCALGIRIPFIGIYHKIKEVDVGVVAVFDGHNGAEASEMASKLLLEYFLLHVYFLLDGIYSIMFRKSTGKLTYKEVTILNNVINLYKEDQSSHSKGSCWALPAILDRSFHMEVLKESLLRAVHDVDLTFSKEALRNNFESGSTAAVILIVDGQIIAANVGDSKAFLCSESHDSSIDKKTSVVSGKRRRKRNSNNRDDFALANYDGPFYNVKELTKDHHPDREDERSRVEAAGGYVLEWAGVHRVNGELALSRAIGDVPYKRYGVIPTPELTEWQSLSANDTFLIASSDGVFEKMTMQDVCDLMLRVKLGVNQELGSFAVTQRNLADYVVDLALEKGTTDNVAAVIVPLGSHYSSKVTLEDWYMLEENSKTSISPLQTIPYQQKSGRFNVQ.

Residues 1–34 (MRLGCSGRRRRLLRAALLRLVVLVLVAPPRRCAG) form the signal peptide. The segment at 67–101 (AGSGGEGDGDRRSSSSSPPPPPHPRGCHVAVDRGR) is disordered. The PPM-type phosphatase domain occupies 92–457 (GCHVAVDRGR…DNVAAVIVPL (366 aa)). Residues Asp-138 and Gly-139 each contribute to the Mn(2+) site. The interval 286-306 (KKTSVVSGKRRRKRNSNNRDD) is disordered. Mn(2+)-binding residues include Asp-397 and Asp-448.

This sequence belongs to the PP2C family. The cofactor is Mg(2+). Requires Mn(2+) as cofactor.

It catalyses the reaction O-phospho-L-seryl-[protein] + H2O = L-seryl-[protein] + phosphate. It carries out the reaction O-phospho-L-threonyl-[protein] + H2O = L-threonyl-[protein] + phosphate. This chain is Putative protein phosphatase 2C 76, found in Oryza sativa subsp. japonica (Rice).